A 663-amino-acid polypeptide reads, in one-letter code: 72 kDa type IV collagenase (663 aa).

The signal sequence occupies residues 1-26 (MKTHSVFGFFFKVLLIQVYLFNKTLA). Residues 27–106 (APSPIIKFPG…PRCGNPDVAN (80 aa)) constitute a propeptide, activation peptide. A Cysteine switch motif is present at residues 97–104 (PRCGNPDV). Residue Cys-99 coordinates Zn(2+). A collagenase-like 1 region spans residues 107 to 218 (YNFFPRKPKW…LWTLGEGQVV (112 aa)). Residues Asp-131 and Asp-165 each contribute to the Ca(2+) site. Residues His-175 and Asp-177 each contribute to the Zn(2+) site. Ca(2+)-binding residues include Asp-182 and Gly-183. His-190 lines the Zn(2+) pocket. Positions 197, 199, and 201 each coordinate Ca(2+). Zn(2+) is bound at residue His-203. Asp-205, Asp-206, and Glu-208 together coordinate Ca(2+). Residues 219–393 (RVKYGNADGE…WGFCPDQGYS (175 aa)) form a collagen-binding region. Fibronectin type-II domains lie at 225 to 273 (ADGE…FCPH), 283 to 331 (GDGQ…FCPE), and 341 to 389 (SEGA…FCPD). Disulfide bonds link Cys-230–Cys-256, Cys-244–Cys-271, Cys-288–Cys-314, Cys-302–Cys-329, Cys-346–Cys-372, and Cys-360–Cys-387. The interval 394–468 (LFLVAAHEFG…GPRPTLGPVT (75 aa)) is collagenase-like 2. Residue His-400 participates in Zn(2+) binding. Glu-401 is a catalytic residue. Residues His-404 and His-410 each contribute to the Zn(2+) site. The interval 445-464 (SPDVEPGPGPGPGPGPRPTL) is disordered. Pro residues predominate over residues 449 to 463 (EPGPGPGPGPGPRPT). A disulfide bridge links Cys-472 with Cys-663. Hemopexin repeat units follow at residues 475–519 (DIVF…WPDL), 520–566 (PEKI…GLPP), 568–616 (VQRI…WNGV), and 617–663 (PDNL…WLGC). The Ca(2+) site is built by Asp-479, Asp-524, Asp-572, and Asp-621.

The protein belongs to the peptidase M10A family. In terms of assembly, ligand for integrin alpha-V/beta-3. Ca(2+) serves as cofactor. Zn(2+) is required as a cofactor. In terms of processing, the propeptide is processed by MMP14 (MT-MMP1) and MMP16 (MT-MMP3). Produced by normal skin fibroblasts.

It localises to the secreted. Its subcellular location is the extracellular space. The protein localises to the extracellular matrix. It catalyses the reaction Cleavage of gelatin type I and collagen types IV, V, VII, X. Cleaves the collagen-like sequence Pro-Gln-Gly-|-Ile-Ala-Gly-Gln.. The sequence is that of 72 kDa type IV collagenase (MMP2) from Gallus gallus (Chicken).